The chain runs to 155 residues: Ribonuclease H (155 aa).

Residues 1-142 enclose the RNase H type-1 domain; the sequence is MLKQVEIFTD…CDELARAAAM (142 aa). Positions 10, 48, 70, and 134 each coordinate Mg(2+).

It belongs to the RNase H family. As to quaternary structure, monomer. Requires Mg(2+) as cofactor.

The protein localises to the cytoplasm. It catalyses the reaction Endonucleolytic cleavage to 5'-phosphomonoester.. Endonuclease that specifically degrades the RNA of RNA-DNA hybrids. The polypeptide is Ribonuclease H (Escherichia coli O127:H6 (strain E2348/69 / EPEC)).